A 208-amino-acid polypeptide reads, in one-letter code: Thymidylate kinase (208 aa).

Position 13–20 (13–20 (GLEGAGKS)) interacts with ATP.

It belongs to the thymidylate kinase family.

It carries out the reaction dTMP + ATP = dTDP + ADP. Phosphorylation of dTMP to form dTDP in both de novo and salvage pathways of dTTP synthesis. This Shewanella amazonensis (strain ATCC BAA-1098 / SB2B) protein is Thymidylate kinase.